The chain runs to 319 residues: F-box only protein 8 (319 aa).

Positions 68–111 constitute an F-box domain; that stretch reads FINLEMLPPELSFTILSYLNATDLCLASCVWQDLANDELLWQGL. The 131-residue stretch at 146 to 276 folds into the SEC7 domain; it reads FNANPDEGVN…LILLSIDLTS (131 aa).

Functionally, may promote guanine-nucleotide exchange on an ARF. Promotes the activation of ARF through replacement of GDP with GTP (Potential). The sequence is that of F-box only protein 8 (FBXO8) from Bos taurus (Bovine).